The sequence spans 289 residues: Diaminopimelate epimerase (289 aa).

Substrate is bound by residues Asn11 and Asn78. Cys87 (proton donor) is an active-site residue. Residues 88 to 89 (GN), Asn163, Asn199, and 217 to 218 (ER) each bind substrate. The active-site Proton acceptor is Cys226. A substrate-binding site is contributed by 227–228 (GT).

The protein belongs to the diaminopimelate epimerase family. Homodimer.

The protein localises to the cytoplasm. The catalysed reaction is (2S,6S)-2,6-diaminopimelate = meso-2,6-diaminopimelate. Its pathway is amino-acid biosynthesis; L-lysine biosynthesis via DAP pathway; DL-2,6-diaminopimelate from LL-2,6-diaminopimelate: step 1/1. Its function is as follows. Catalyzes the stereoinversion of LL-2,6-diaminopimelate (L,L-DAP) to meso-diaminopimelate (meso-DAP), a precursor of L-lysine and an essential component of the bacterial peptidoglycan. The sequence is that of Diaminopimelate epimerase from Rhodococcus jostii (strain RHA1).